Here is a 134-residue protein sequence, read N- to C-terminus: Arsenate reductase (134 aa).

Residues C11, C83, and C90 each act as nucleophile in the active site. 2 disulfides stabilise this stretch: C11/C83 and C83/C90.

Belongs to the low molecular weight phosphotyrosine protein phosphatase family. Thioredoxin-coupled ArsC subfamily.

It is found in the cytoplasm. It catalyses the reaction arsenate + [thioredoxin]-dithiol + H(+) = arsenite + [thioredoxin]-disulfide + H2O. Functionally, catalyzes the reduction of arsenate [As(V)] to arsenite [As(III)]. The chain is Arsenate reductase from Bacillus cereus (strain AH187).